Consider the following 311-residue polypeptide: Malate dehydrogenase (311 aa).

NAD(+) contacts are provided by residues 7-13 and D34; that span reads GAAGGIG. Positions 81 and 87 each coordinate substrate. NAD(+) is bound by residues N94 and 117–119; that span reads ITN. Positions 119 and 153 each coordinate substrate. H177 functions as the Proton acceptor in the catalytic mechanism. M227 provides a ligand contact to NAD(+).

The protein belongs to the LDH/MDH superfamily. MDH type 1 family. Homodimer.

It carries out the reaction (S)-malate + NAD(+) = oxaloacetate + NADH + H(+). In terms of biological role, catalyzes the reversible oxidation of malate to oxaloacetate. This chain is Malate dehydrogenase, found in Vibrio atlanticus (strain LGP32) (Vibrio splendidus (strain Mel32)).